Here is a 262-residue protein sequence, read N- to C-terminus: Cytochrome c oxidase subunit 3 (262 aa).

6 consecutive transmembrane segments (helical) span residues 39–59 (YDIS…YQWW), 83–103 (GMIL…WAFF), 120–140 (MGII…ILLA), 163–183 (GLFF…YEYI), 198–218 (FFMA…FLLV), and 240–260 (AWYW…IYWW).

The protein belongs to the cytochrome c oxidase subunit 3 family. In terms of assembly, component of the cytochrome c oxidase (complex IV, CIV), a multisubunit enzyme composed of a catalytic core of 3 subunits and several supernumerary subunits. The complex exists as a monomer or a dimer and forms supercomplexes (SCs) in the inner mitochondrial membrane with ubiquinol-cytochrome c oxidoreductase (cytochrome b-c1 complex, complex III, CIII).

The protein resides in the mitochondrion inner membrane. It catalyses the reaction 4 Fe(II)-[cytochrome c] + O2 + 8 H(+)(in) = 4 Fe(III)-[cytochrome c] + 2 H2O + 4 H(+)(out). Functionally, component of the cytochrome c oxidase, the last enzyme in the mitochondrial electron transport chain which drives oxidative phosphorylation. The respiratory chain contains 3 multisubunit complexes succinate dehydrogenase (complex II, CII), ubiquinol-cytochrome c oxidoreductase (cytochrome b-c1 complex, complex III, CIII) and cytochrome c oxidase (complex IV, CIV), that cooperate to transfer electrons derived from NADH and succinate to molecular oxygen, creating an electrochemical gradient over the inner membrane that drives transmembrane transport and the ATP synthase. Cytochrome c oxidase is the component of the respiratory chain that catalyzes the reduction of oxygen to water. Electrons originating from reduced cytochrome c in the intermembrane space (IMS) are transferred via the dinuclear copper A center (CU(A)) of subunit 2 and heme A of subunit 1 to the active site in subunit 1, a binuclear center (BNC) formed by heme A3 and copper B (CU(B)). The BNC reduces molecular oxygen to 2 water molecules using 4 electrons from cytochrome c in the IMS and 4 protons from the mitochondrial matrix. The polypeptide is Cytochrome c oxidase subunit 3 (mt:CoIII) (Drosophila melanogaster (Fruit fly)).